The following is a 688-amino-acid chain: Glycine--tRNA ligase beta subunit (688 aa).

Belongs to the class-II aminoacyl-tRNA synthetase family. Tetramer of two alpha and two beta subunits.

It localises to the cytoplasm. The catalysed reaction is tRNA(Gly) + glycine + ATP = glycyl-tRNA(Gly) + AMP + diphosphate. The protein is Glycine--tRNA ligase beta subunit of Vibrio atlanticus (strain LGP32) (Vibrio splendidus (strain Mel32)).